We begin with the raw amino-acid sequence, 463 residues long: Probable multidrug resistance protein YoeA (463 aa).

The next 12 helical transmembrane spans lie at 24 to 44, 56 to 76, 106 to 126, 143 to 163, 177 to 197, 202 to 222, 256 to 276, 293 to 313, 330 to 350, 370 to 390, 397 to 417, and 427 to 447; these read LFLV…LVGM, VAAV…TIGI, FTFL…LDIL, ARIL…TTFL, IVST…MFGF, IYGS…VLMV, VPAS…ISFV, VASY…IFAA, VGIW…YVFS, LLMI…ISAT, VLWP…PVAF, and ILGV…LIYG.

Belongs to the multi antimicrobial extrusion (MATE) (TC 2.A.66.1) family.

It localises to the cell membrane. The sequence is that of Probable multidrug resistance protein YoeA (yoeA) from Bacillus subtilis (strain 168).